Reading from the N-terminus, the 245-residue chain is 1-(5-phosphoribosyl)-5-[(5-phosphoribosylamino)methylideneamino] imidazole-4-carboxamide isomerase (245 aa).

The active-site Proton acceptor is Asp7. The active-site Proton donor is the Asp129.

This sequence belongs to the HisA/HisF family.

It is found in the cytoplasm. It catalyses the reaction 1-(5-phospho-beta-D-ribosyl)-5-[(5-phospho-beta-D-ribosylamino)methylideneamino]imidazole-4-carboxamide = 5-[(5-phospho-1-deoxy-D-ribulos-1-ylimino)methylamino]-1-(5-phospho-beta-D-ribosyl)imidazole-4-carboxamide. The protein operates within amino-acid biosynthesis; L-histidine biosynthesis; L-histidine from 5-phospho-alpha-D-ribose 1-diphosphate: step 4/9. This Salmonella agona (strain SL483) protein is 1-(5-phosphoribosyl)-5-[(5-phosphoribosylamino)methylideneamino] imidazole-4-carboxamide isomerase.